The primary structure comprises 1872 residues: Fatty acid synthase beta subunit pkiC (1872 aa).

Positions 174–425 (VFGGQGECSR…DQSRIPFRDR (252 aa)) are acetyltransferase (AT) domain. The enoyl reductase (ER) domain stretch occupies residues 591-836 (NRVLGAPPIM…IIAATPGVSD (246 aa)). The interval 1111 to 1132 (TTPASWSTLSLTERDTSEETSD) is disordered. Residues 1158-1597 (PSHPLWMRAL…MPLEKLVVEI (440 aa)) are dehydratase (DH) domain. One can recognise a MaoC-like domain in the interval 1518–1617 (PPSNEPYAQL…CFSILAKRKE (100 aa)).

It belongs to the fungal fatty acid synthetase subunit beta family. In terms of assembly, [Alpha(6)beta(6)] hexamers of two multifunctional subunits (alpha and beta).

The catalysed reaction is acetyl-CoA + n malonyl-CoA + 2n NADPH + 4n H(+) = a long-chain-acyl-CoA + n CoA + n CO2 + 2n NADP(+).. It catalyses the reaction holo-[ACP] + acetyl-CoA = acetyl-[ACP] + CoA. It carries out the reaction holo-[ACP] + malonyl-CoA = malonyl-[ACP] + CoA. The enzyme catalyses a (3R)-hydroxyacyl-[ACP] = a (2E)-enoyl-[ACP] + H2O. The catalysed reaction is a 2,3-saturated acyl-[ACP] + NAD(+) = a (2E)-enoyl-[ACP] + NADH + H(+). It catalyses the reaction (9Z)-octadecenoyl-[ACP] + H2O = (9Z)-octadecenoate + holo-[ACP] + H(+). It functions in the pathway secondary metabolite biosynthesis. In terms of biological role, fatty acid synthase beta subunit; part of the pki gene cluster that mediates the biosynthesis of 2,4-dihydroxy-3-methyl-6-(2-oxoundecyl)benzaldehyde. The first step in the pathway is the generation of the decanoyl starter unit by the FAS composed of subunits pkiB and pkiC, which is then transferred directly from the FAS to the SAT domain of the non-reducing polyketide synthase pkiA. PkiA condenses the decanoyyl starter unit with 4 malonyl-CoA units and performs one methylation step to yield 2,4-dihydroxy-3-methyl-6-(2-oxoundecyl)benzaldehyde. The polypeptide is Fatty acid synthase beta subunit pkiC (Emericella nidulans (strain FGSC A4 / ATCC 38163 / CBS 112.46 / NRRL 194 / M139) (Aspergillus nidulans)).